The following is a 444-amino-acid chain: 3-phosphoshikimate 1-carboxyvinyltransferase (444 aa).

3-phosphoshikimate-binding residues include Lys-29, Ser-30, and Arg-34. Lys-29 serves as a coordination point for phosphoenolpyruvate. Positions 102 and 131 each coordinate phosphoenolpyruvate. 3-phosphoshikimate is bound by residues Ser-176, Gln-178, Asp-326, and Lys-353. Residue Gln-178 participates in phosphoenolpyruvate binding. The Proton acceptor role is filled by Asp-326. Arg-357 and Arg-399 together coordinate phosphoenolpyruvate.

It belongs to the EPSP synthase family. As to quaternary structure, monomer.

It localises to the cytoplasm. It catalyses the reaction 3-phosphoshikimate + phosphoenolpyruvate = 5-O-(1-carboxyvinyl)-3-phosphoshikimate + phosphate. It participates in metabolic intermediate biosynthesis; chorismate biosynthesis; chorismate from D-erythrose 4-phosphate and phosphoenolpyruvate: step 6/7. Catalyzes the transfer of the enolpyruvyl moiety of phosphoenolpyruvate (PEP) to the 5-hydroxyl of shikimate-3-phosphate (S3P) to produce enolpyruvyl shikimate-3-phosphate and inorganic phosphate. This Synechococcus sp. (strain JA-3-3Ab) (Cyanobacteria bacterium Yellowstone A-Prime) protein is 3-phosphoshikimate 1-carboxyvinyltransferase.